The chain runs to 323 residues: Sodium/potassium-transporting ATPase subunit beta-2 (323 aa).

Residues Met-1–Lys-50 are Cytoplasmic-facing. Residues Ile-51–Trp-71 traverse the membrane as a helical; Signal-anchor for type II membrane protein segment. Residues Ala-72–Asp-323 are Extracellular-facing. Cystine bridges form between Cys-153-Cys-165 and Cys-175-Cys-189. Asn-180 and Asn-206 each carry an N-linked (GlcNAc...) asparagine glycan. Cys-241 and Cys-298 are joined by a disulfide.

The protein belongs to the X(+)/potassium ATPases subunit beta family. The sodium/potassium-transporting ATPase is composed of a catalytic alpha subunit, an auxiliary non-catalytic beta subunit and an additional regulatory subunit. As to expression, in embryos, it is expressed in the neurons of the CNS and PNS, in Garland cells and posterior spiracles. In adults, it shows a nervous system specific distribution: optic lobes, brain, thoracic ganglia and axonal pathways in the leg. Both isoforms concentrate in the adult head, isoform 2.2 being predominant. Both isoforms are weakly expressed in the thorax and very poorly expressed in the abdomen.

The protein resides in the cell membrane. This is the non-catalytic component of the active enzyme, which catalyzes the hydrolysis of ATP coupled with the exchange of Na(+) and K(+) ions across the plasma membrane. The beta subunit regulates, through assembly of alpha/beta heterodimers, the number of sodium pumps transported to the plasma membrane. The protein is Sodium/potassium-transporting ATPase subunit beta-2 (nrv2) of Drosophila melanogaster (Fruit fly).